Here is a 483-residue protein sequence, read N- to C-terminus: Aspartyl/glutamyl-tRNA(Asn/Gln) amidotransferase subunit B (483 aa).

The protein belongs to the GatB/GatE family. GatB subfamily. Heterotrimer of A, B and C subunits.

The enzyme catalyses L-glutamyl-tRNA(Gln) + L-glutamine + ATP + H2O = L-glutaminyl-tRNA(Gln) + L-glutamate + ADP + phosphate + H(+). The catalysed reaction is L-aspartyl-tRNA(Asn) + L-glutamine + ATP + H2O = L-asparaginyl-tRNA(Asn) + L-glutamate + ADP + phosphate + 2 H(+). Allows the formation of correctly charged Asn-tRNA(Asn) or Gln-tRNA(Gln) through the transamidation of misacylated Asp-tRNA(Asn) or Glu-tRNA(Gln) in organisms which lack either or both of asparaginyl-tRNA or glutaminyl-tRNA synthetases. The reaction takes place in the presence of glutamine and ATP through an activated phospho-Asp-tRNA(Asn) or phospho-Glu-tRNA(Gln). This chain is Aspartyl/glutamyl-tRNA(Asn/Gln) amidotransferase subunit B, found in Marinobacter nauticus (strain ATCC 700491 / DSM 11845 / VT8) (Marinobacter aquaeolei).